The following is a 1370-amino-acid chain: DNA-directed RNA polymerase subunit beta (1370 aa).

This sequence belongs to the RNA polymerase beta chain family. In terms of assembly, the RNAP catalytic core consists of 2 alpha, 1 beta, 1 beta' and 1 omega subunit. When a sigma factor is associated with the core the holoenzyme is formed, which can initiate transcription.

The catalysed reaction is RNA(n) + a ribonucleoside 5'-triphosphate = RNA(n+1) + diphosphate. Functionally, DNA-dependent RNA polymerase catalyzes the transcription of DNA into RNA using the four ribonucleoside triphosphates as substrates. The sequence is that of DNA-directed RNA polymerase subunit beta from Albidiferax ferrireducens (strain ATCC BAA-621 / DSM 15236 / T118) (Rhodoferax ferrireducens).